The sequence spans 295 residues: Protease HtpX (295 aa).

A run of 2 helical transmembrane segments spans residues 4–24 and 42–62; these read ILLF…TLSL and QLLV…LFIS. A Zn(2+)-binding site is contributed by H147. E148 is an active-site residue. Zn(2+) is bound at residue H151. A run of 2 helical transmembrane segments spans residues 158-178 and 199-219; these read VTLA…ARII and ITTI…VMWF. E224 serves as a coordination point for Zn(2+).

The protein belongs to the peptidase M48B family. It depends on Zn(2+) as a cofactor.

The protein localises to the cell inner membrane. The polypeptide is Protease HtpX (Pseudomonas syringae pv. syringae (strain B728a)).